The primary structure comprises 396 residues: MTRVVHIIGAAFLLSSYAYCGLSRFNEHDIEGGDSYKRVKREFERLGSKWLGGTINYYYADNNNSVKEKVKSAIAYIANHTCIKFNEDPTHWQRLKIFTSELSHCRSTIGAPGTRSGSAGELSMETGWCANIGSIVHEFSHSLGRYHEHTRPDRDNSLKVTSTDYEARPRPWGMTTMYGPFEHGSIMMYHSSNYGVGKMEPYDMEYKNTMGSRRVTFYDMYKINQYYGCGCSTQLECKNGGYTSPSDCSRCNCPKGFFGKLCNERRQQDSYELKATYGRWQTQTISFNYKPEPVSDGFYSTFVYITGEANSTIEITMEGLENVICTAGCTWNGVEIKSREDSRITSPVMCCKDEPLYKKVFKSLHNPTIIELYSKETAPSTATFKYRFMNDKIVFG.

The first 20 residues, 1–20 (MTRVVHIIGAAFLLSSYAYC), serve as a signal peptide directing secretion. A Peptidase M12A domain is found at 44–230 (ERLGSKWLGG…YKINQYYGCG (187 aa)). N-linked (GlcNAc...) asparagine glycans are attached at residues Asn-63 and Asn-79. Disulfide bonds link Cys-82/Cys-229, Cys-105/Cys-129, Cys-231/Cys-251, and Cys-253/Cys-262. Position 137 (His-137) interacts with Zn(2+). Glu-138 is an active-site residue. Zn(2+) contacts are provided by His-141 and His-147. The EGF-like domain maps to 224 to 263 (NQYYGCGCSTQLECKNGGYTSPSDCSRCNCPKGFFGKLCN). The N-linked (GlcNAc...) asparagine glycan is linked to Asn-310.

Zn(2+) is required as a cofactor.

It is found in the secreted. In terms of biological role, metalloprotease. This chain is Zinc metalloproteinase nas-24 (nas-24), found in Caenorhabditis elegans.